The chain runs to 230 residues: 7-cyano-7-deazaguanine synthase (230 aa).

ATP is bound at residue 14–24 (LSGGLDSTTTL). Cysteine 194, cysteine 204, cysteine 207, and cysteine 210 together coordinate Zn(2+).

Belongs to the QueC family. Zn(2+) serves as cofactor.

The enzyme catalyses 7-carboxy-7-deazaguanine + NH4(+) + ATP = 7-cyano-7-deazaguanine + ADP + phosphate + H2O + H(+). Its pathway is purine metabolism; 7-cyano-7-deazaguanine biosynthesis. In terms of biological role, catalyzes the ATP-dependent conversion of 7-carboxy-7-deazaguanine (CDG) to 7-cyano-7-deazaguanine (preQ(0)). In Vesicomyosocius okutanii subsp. Calyptogena okutanii (strain HA), this protein is 7-cyano-7-deazaguanine synthase.